We begin with the raw amino-acid sequence, 72 residues long: Translational regulator CsrA (72 aa).

It belongs to the CsrA/RsmA family. In terms of assembly, homodimer; the beta-strands of each monomer intercalate to form a hydrophobic core, while the alpha-helices form wings that extend away from the core.

It is found in the cytoplasm. Its function is as follows. A translational regulator that binds mRNA to regulate translation initiation and/or mRNA stability. Usually binds in the 5'-UTR at or near the Shine-Dalgarno sequence preventing ribosome-binding, thus repressing translation. Its main target seems to be the major flagellin gene, while its function is anatagonized by FliW. This is Translational regulator CsrA from Clostridium botulinum (strain Okra / Type B1).